A 501-amino-acid chain; its full sequence is Pyruvate kinase (501 aa).

Arg-50 is a binding site for substrate. Asn-52, Ser-54, Asp-85, and Thr-86 together coordinate K(+). Asn-52–His-55 contributes to the ATP binding site. 2 residues coordinate ATP: Arg-92 and Lys-178. Mg(2+) is bound at residue Glu-243. Substrate-binding residues include Gly-266, Asp-267, and Thr-299. Asp-267 is a Mg(2+) binding site.

The protein belongs to the pyruvate kinase family. In terms of assembly, homotetramer. The cofactor is Mg(2+). It depends on K(+) as a cofactor.

The enzyme catalyses pyruvate + ATP = phosphoenolpyruvate + ADP + H(+). Its pathway is carbohydrate degradation; glycolysis; pyruvate from D-glyceraldehyde 3-phosphate: step 5/5. In Naumovozyma castellii (Yeast), this protein is Pyruvate kinase (PYK1).